Here is a 460-residue protein sequence, read N- to C-terminus: MTVTAPNALNFECETGNYHTFCPISCVAWLYQKIEDSFFLVIGTKTCGYFLQNAMGVMIFAEPRYAMAELEEGDISAQLNDYEELKRLCLEIKRDRNPSVIVWIGTCTTEIIKMDLEGLAPKLEAEIGIPIVVARANGLDYAFTQGEDTVLAAMAARCPTSTAISDPEERNPIQRLLNFGKKKEEVQAQSSQYHPHPPLVLFGSLPDPVVTQLTLELKKQGIKVSGWLPAKRYTELPVIDEGYYVAGVNPFLSRTATTLIRRRKCQLITAPFPIGPDGTRTWIEQICATFGIQPQGLAEREAETWQKLSDYLELVRGKSVFFMGDNLLEISLARFLIRCGMRVLEIGIPYMDKRYQAAELALLSQTCAEMGHPLPTIVEKPDNYNQLQRIKALQPDLVITGMAHANPLEARGISTKWSVEFTFAQIHGFGNARDILELVTRPLRRNQALAGLGWQKLVAH.

3 residues coordinate [4Fe-4S] cluster: C22, C47, and C107.

Belongs to the BchN/ChlN family. In terms of assembly, protochlorophyllide reductase is composed of three subunits; ChlL, ChlN and ChlB. Forms a heterotetramer of two ChlB and two ChlN subunits. Requires [4Fe-4S] cluster as cofactor.

It catalyses the reaction chlorophyllide a + oxidized 2[4Fe-4S]-[ferredoxin] + 2 ADP + 2 phosphate = protochlorophyllide a + reduced 2[4Fe-4S]-[ferredoxin] + 2 ATP + 2 H2O. It functions in the pathway porphyrin-containing compound metabolism; chlorophyll biosynthesis (light-independent). Functionally, component of the dark-operative protochlorophyllide reductase (DPOR) that uses Mg-ATP and reduced ferredoxin to reduce ring D of protochlorophyllide (Pchlide) to form chlorophyllide a (Chlide). This reaction is light-independent. The NB-protein (ChlN-ChlB) is the catalytic component of the complex. The protein is Light-independent protochlorophyllide reductase subunit N of Thermosynechococcus vestitus (strain NIES-2133 / IAM M-273 / BP-1).